A 479-amino-acid polypeptide reads, in one-letter code: RAC-gamma serine/threonine-protein kinase (479 aa).

Ser-2 carries the post-translational modification N-acetylserine. The PH domain maps to 5-107; sequence TIVKEDWVQK…WTEAIQAVAD (103 aa). A disulfide bridge links Cys-59 with Cys-76. The region spanning 148–405 is the Protein kinase domain; the sequence is FDYLKLLGKG…PKEIMRHSFF (258 aa). ATP is bound by residues 154-162 and Lys-177; that span reads LGKGTFGKV. Asp-271 (proton acceptor) is an active-site residue. The cysteines at positions 293 and 307 are disulfide-linked. Thr-302 is a glycosylation site (O-linked (GlcNAc) threonine). Position 305 is a phosphothreonine; by PDPK1 (Thr-305). Thr-309 is a glycosylation site (O-linked (GlcNAc) threonine). Positions 406-479 constitute an AGC-kinase C-terminal domain; it reads SGVNWQDVYD…QFSYSASGRE (74 aa). Residues 446 to 479 form a disordered region; sequence ITPPEKDDDDGMDCMDNERRPHFPQFSYSASGRE. Thr-447 carries the phosphothreonine modification. The segment covering 451–460 has biased composition (acidic residues); sequence KDDDDGMDCM. A Phosphoserine; by PKC/PRKCZ modification is found at Ser-472. O-linked (GlcNAc) serine; alternate glycosylation is present at Ser-472.

Belongs to the protein kinase superfamily. AGC Ser/Thr protein kinase family. RAC subfamily. In terms of assembly, interacts (via PH domain) with TCL1A; this enhances AKT3 phosphorylation and activation. Interacts with TRAF6. Interacts with KCTD20. Interacts with BTBD10. Post-translationally, phosphorylation on Thr-305 and Ser-472 is required for full activity. Phosphorylation of the activation loop at Thr-305 by PDPK1/PDK1 is a prerequisite for full activation. Phosphorylation at Ser-472 by mTORC2 in response to growth factors plays a key role in AKT1 activation by facilitating subsequent phosphorylation of the activation loop by PDPK1/PDK1. Ubiquitinated. When fully phosphorylated and translocated into the nucleus, undergoes 'Lys-48'-polyubiquitination catalyzed by TTC3, leading to its degradation by the proteasome. In terms of processing, O-GlcNAcylation at Thr-302 and Thr-309 inhibits activating phosphorylation at Thr-305 via disrupting the interaction between AKT and PDPK1/PDK1.

It localises to the nucleus. Its subcellular location is the cytoplasm. It is found in the membrane. It carries out the reaction L-seryl-[protein] + ATP = O-phospho-L-seryl-[protein] + ADP + H(+). It catalyses the reaction L-threonyl-[protein] + ATP = O-phospho-L-threonyl-[protein] + ADP + H(+). With respect to regulation, two specific sites, one in the kinase domain (Thr-305) and the other in the C-terminal regulatory region (Ser-472), need to be phosphorylated for its full activation. IGF-1 leads to the activation of AKT3, which may play a role in regulating cell survival. Its function is as follows. AKT3 is one of 3 closely related serine/threonine-protein kinases (AKT1, AKT2 and AKT3) called the AKT kinase, and which regulate many processes including metabolism, proliferation, cell survival, growth and angiogenesis. This is mediated through serine and/or threonine phosphorylation of a range of downstream substrates. Over 100 substrate candidates have been reported so far, but for most of them, no isoform specificity has been reported. AKT3 is the least studied AKT isoform. It plays an important role in brain development and is crucial for the viability of malignant glioma cells. AKT3 isoform may also be the key molecule in up-regulation and down-regulation of MMP13 via IL13. Required for the coordination of mitochondrial biogenesis with growth factor-induced increases in cellular energy demands. Down-regulation by RNA interference reduces the expression of the phosphorylated form of BAD, resulting in the induction of caspase-dependent apoptosis. The chain is RAC-gamma serine/threonine-protein kinase (Akt3) from Rattus norvegicus (Rat).